A 185-amino-acid chain; its full sequence is Ribosome-recycling factor (185 aa).

Belongs to the RRF family.

The protein localises to the cytoplasm. Functionally, responsible for the release of ribosomes from messenger RNA at the termination of protein biosynthesis. May increase the efficiency of translation by recycling ribosomes from one round of translation to another. The chain is Ribosome-recycling factor from Streptococcus pneumoniae serotype 19F (strain G54).